A 162-amino-acid chain; its full sequence is Protein NrdI (162 aa).

Belongs to the NrdI family.

Probably involved in ribonucleotide reductase function. The chain is Protein NrdI from Streptococcus pyogenes serotype M28 (strain MGAS6180).